The primary structure comprises 106 residues: Large ribosomal subunit protein eL42 (106 aa).

It belongs to the eukaryotic ribosomal protein eL42 family.

The chain is Large ribosomal subunit protein eL42 (RPL44) from Candida tropicalis (Yeast).